Reading from the N-terminus, the 422-residue chain is Adenylosuccinate synthetase (422 aa).

GTP-binding positions include 11-17 and 39-41; these read GDEGKGK and GHT. D12 acts as the Proton acceptor in catalysis. Residues D12 and G39 each contribute to the Mg(2+) site. Residues 12–15, 37–40, T129, R143, N219, T234, and R298 each bind IMP; these read DEGK and NAGH. Catalysis depends on H40, which acts as the Proton donor. 294 to 300 provides a ligand contact to substrate; sequence VTTGRKR. GTP-binding positions include R300, 326–328, and 411–413; these read KLD and GTG.

This sequence belongs to the adenylosuccinate synthetase family. As to quaternary structure, homodimer. Mg(2+) serves as cofactor.

It is found in the cytoplasm. It carries out the reaction IMP + L-aspartate + GTP = N(6)-(1,2-dicarboxyethyl)-AMP + GDP + phosphate + 2 H(+). The protein operates within purine metabolism; AMP biosynthesis via de novo pathway; AMP from IMP: step 1/2. Functionally, plays an important role in the de novo pathway and in the salvage pathway of purine nucleotide biosynthesis. Catalyzes the first committed step in the biosynthesis of AMP from IMP. This Talaromyces stipitatus (strain ATCC 10500 / CBS 375.48 / QM 6759 / NRRL 1006) (Penicillium stipitatum) protein is Adenylosuccinate synthetase.